Here is a 221-residue protein sequence, read N- to C-terminus: Lactate racemization regulatory protein (221 aa).

One can recognise an HTH crp-type domain in the interval 139-213; sequence NGKKGAICAF…NHKFIIQDVS (75 aa). A DNA-binding region (H-T-H motif) is located at residues 172 to 192; it reads NDDIAGFCGISSRSSVNRMLK.

Multimerizes on DNA. Multimerization is required for transcription activation.

Its activity is regulated as follows. L-lactate acts as a positive effector on the binding and multimerization of LarR on DNA, while D-lactate antagonizes the positive effect of L-lactate. Its function is as follows. Positive transcriptional regulator that is absolutely required for the expression of lactate racemase (Lar) activity. Controls Lar expression by sensing the L-/D-lactate ration. Binds to a 16-bp palindromic sequence (Lar box motif) that is present in the larR-larA intergenic region, allowing transcription of the larABCDE operon. The sequence is that of Lactate racemization regulatory protein from Lactiplantibacillus plantarum (strain ATCC BAA-793 / NCIMB 8826 / WCFS1) (Lactobacillus plantarum).